A 232-amino-acid polypeptide reads, in one-letter code: Clarin-1 (232 aa).

The chain crosses the membrane as a helical span at residues 8-28 (IIFCMAGVLSFLCALGVVTAV). Residue N48 is glycosylated (N-linked (GlcNAc...) asparagine). 2 helical membrane-spanning segments follow: residues 101 to 121 (IILF…FFMY) and 135 to 155 (LGLY…MILF). N-linked (GlcNAc...) asparagine glycosylation occurs at N184. A helical membrane pass occupies residues 186–206 (TTSFWVVFICFFVHFLNGLLI).

This sequence belongs to the clarin family.

The protein resides in the cell membrane. May have a role in the excitatory ribbon synapse junctions between hair cells and cochlear ganglion cells and presumably also in analogous synapses within the retina. This is Clarin-1 (Clrn1) from Mus musculus (Mouse).